A 343-amino-acid chain; its full sequence is L-threonine 3-dehydrogenase (343 aa).

Cys40 contributes to the Zn(2+) binding site. Catalysis depends on charge relay system residues Thr42 and His45. Zn(2+)-binding residues include His65, Glu66, Cys95, Cys98, Cys101, and Cys109. Residues Ile177, Asp197, Arg202, Leu264–Ile266, and Ile288–Tyr289 each bind NAD(+).

Belongs to the zinc-containing alcohol dehydrogenase family. Homotetramer. Requires Zn(2+) as cofactor.

The protein resides in the cytoplasm. It carries out the reaction L-threonine + NAD(+) = (2S)-2-amino-3-oxobutanoate + NADH + H(+). It functions in the pathway amino-acid degradation; L-threonine degradation via oxydo-reductase pathway; glycine from L-threonine: step 1/2. In terms of biological role, catalyzes the NAD(+)-dependent oxidation of L-threonine to 2-amino-3-ketobutyrate. In Vibrio vulnificus (strain CMCP6), this protein is L-threonine 3-dehydrogenase.